A 283-amino-acid chain; its full sequence is Protease HtpX (283 aa).

A run of 2 helical transmembrane segments spans residues 4–24 and 33–53; these read IALF…ILSV and GGIL…SLFM. A Zn(2+)-binding site is contributed by His139. Glu140 is an active-site residue. His143 is a binding site for Zn(2+). Helical transmembrane passes span 147-167 and 192-212; these read GDMV…IFLS and FLVS…IAMW. Position 218 (Glu218) interacts with Zn(2+).

The protein belongs to the peptidase M48B family. It depends on Zn(2+) as a cofactor.

The protein resides in the cell inner membrane. The protein is Protease HtpX of Glaesserella parasuis serovar 5 (strain SH0165) (Haemophilus parasuis).